A 1517-amino-acid chain; its full sequence is DNA-directed RNA polymerase subunit beta' (1517 aa).

Residues Cys71, Cys73, Cys86, and Cys89 each coordinate Zn(2+). 3 residues coordinate Mg(2+): Asp482, Asp484, and Asp486. Cys812, Cys886, Cys893, and Cys896 together coordinate Zn(2+).

Belongs to the RNA polymerase beta' chain family. In terms of assembly, the RNAP catalytic core consists of 2 alpha, 1 beta, 1 beta' and 1 omega subunit. When a sigma factor is associated with the core the holoenzyme is formed, which can initiate transcription. Requires Mg(2+) as cofactor. It depends on Zn(2+) as a cofactor.

The enzyme catalyses RNA(n) + a ribonucleoside 5'-triphosphate = RNA(n+1) + diphosphate. In terms of biological role, DNA-dependent RNA polymerase catalyzes the transcription of DNA into RNA using the four ribonucleoside triphosphates as substrates. In Campylobacter lari (strain RM2100 / D67 / ATCC BAA-1060), this protein is DNA-directed RNA polymerase subunit beta'.